Consider the following 713-residue polypeptide: Cadherin-13 (713 aa).

Positions 1–22 (MQPATPLVLCVLLSQVLLLTSA) are cleaved as a signal peptide. Positions 23–138 (EDLDCTPGFQ…RTSPVPRQKR (116 aa)) are excised as a propeptide. Asn52 and Asn86 each carry an N-linked (GlcNAc...) asparagine glycan. Cadherin domains follow at residues 139–245 (SIVV…RPIF), 246–363 (REGP…SPKF), 364–477 (TKKE…SPVF), 478–585 (YPDP…APFI), and 584–694 (FIYP…AAGA). Positions 156 to 178 (PRDVGKVVDSDRPEGSKFRLTGK) are disordered. A compositionally biased stretch (basic and acidic residues) spans 158–172 (DVGKVVDSDRPEGSK). Asn382, Asn489, Asn500, Asn530, Asn598, Asn638, and Asn671 each carry an N-linked (GlcNAc...) asparagine glycan. A lipid anchor (GPI-anchor amidated glycine) is attached at Gly693. Positions 694 to 713 (APHFSAATALLLSLFSLARL) are cleaved as a propeptide — removed in mature form.

As to quaternary structure, by contrast to classical cadherins, homodimerization in trans is not mediated by cadherin EC1 domain strand-swapping, but instead through a homophilic adhesive interface which joins two elongated EC1-EC2 domains through a region near their Ca2+-binding sites to form a tetrahedral, X-like shape.

It localises to the cell membrane. The protein localises to the cytoplasm. In terms of biological role, cadherins are calcium-dependent cell adhesion proteins. They preferentially interact with themselves in a homophilic manner in connecting cells; cadherins may thus contribute to the sorting of heterogeneous cell types. May act as a negative regulator of neural cell growth. This Bos taurus (Bovine) protein is Cadherin-13 (CDH13).